The sequence spans 351 residues: Anthranilate phosphoribosyltransferase (351 aa).

5-phospho-alpha-D-ribose 1-diphosphate-binding positions include Gly-80, 83–84 (GD), Thr-88, 90–93 (NIST), 108–116 (KHGNRSVTS), and Ser-120. Gly-80 lines the anthranilate pocket. Ser-92 provides a ligand contact to Mg(2+). Position 111 (Asn-111) interacts with anthranilate. Arg-166 contacts anthranilate. Mg(2+)-binding residues include Asp-229 and Glu-230.

The protein belongs to the anthranilate phosphoribosyltransferase family. As to quaternary structure, homodimer. It depends on Mg(2+) as a cofactor.

It catalyses the reaction N-(5-phospho-beta-D-ribosyl)anthranilate + diphosphate = 5-phospho-alpha-D-ribose 1-diphosphate + anthranilate. Its pathway is amino-acid biosynthesis; L-tryptophan biosynthesis; L-tryptophan from chorismate: step 2/5. Its function is as follows. Catalyzes the transfer of the phosphoribosyl group of 5-phosphorylribose-1-pyrophosphate (PRPP) to anthranilate to yield N-(5'-phosphoribosyl)-anthranilate (PRA). The sequence is that of Anthranilate phosphoribosyltransferase from Pelodictyon phaeoclathratiforme (strain DSM 5477 / BU-1).